The primary structure comprises 1829 residues: DNA polymerase (1829 aa).

2 DOD-type homing endonuclease domains span residues 527 to 668 (LSGI…SLGI) and 1136 to 1269 (FLGY…SLGV).

This sequence belongs to the DNA polymerase type-B family. In terms of processing, this protein undergoes a protein self splicing that involves a post-translational excision of the three intervening regions (inteins) followed by peptide ligation.

It catalyses the reaction DNA(n) + a 2'-deoxyribonucleoside 5'-triphosphate = DNA(n+1) + diphosphate. This chain is DNA polymerase (pol), found in Thermococcus aggregans.